We begin with the raw amino-acid sequence, 301 residues long: UBX domain-containing protein 2 (301 aa).

Positions M1 to H61 are disordered. The SEP domain maps to T89–V153. Residues G176–A200 form a disordered region. The span at S178–T192 shows a compositional bias: low complexity. Positions M218–K295 constitute a UBX domain.

It belongs to the NSFL1C family. Interacts with cdc-48.1 (via N-terminus) and cdc-48.2 (via N-terminus). Interacts with kinase air-1. As to expression, expressed in the germline (at protein level). Expressed in spermatocytes but not in mature sperm (at protein level). Ubiquitously expressed. Predominantly expressed in the spermatheca.

It is found in the cytoplasm. The protein localises to the perinuclear region. The protein resides in the nucleus. It localises to the cytoskeleton. Its subcellular location is the microtubule organizing center. It is found in the centrosome. Its function is as follows. Ubiquitin-binding protein which acts as an adapter for ATPase cdc-48.1 and/or cdc-48.2, conferring substrate specificity. Together with ubxn-2 and ubxn-3, plays a role in hermaphrodite spermatogenesis probably by promoting the degradation of sex determination terminal factor tra-1. Probably in association with ATPase cdc-48.1 or/and cdc-48.2, regulates the centrosomal levels of kinase air-1 levels during mitotic progression by promoting air-1 removal from centrosomes in prophase. Also, regulates spindle orientation in the one-cell embryo by controlling centration and rotation of the pronuclei-centrosome complex in prophase. The chain is UBX domain-containing protein 2 from Caenorhabditis elegans.